The sequence spans 319 residues: MRTIAVLTSGGDAPGMNAAIRAVVRTGLEKGLKVMGIQRGYNGLINGEIFEMDTHSVSDIIQRGGTILRTARCEEFRTEQGREKAAKILKAFGIDGLVVIGGDGSFHGAQLLSKLGINTVGLPGTIDNDLAYTDYTIGFDTSINTVLDAINKLRDTSTSHERVSVVEVMGRNCGDIALYTGVAGGAESIIIPEKEYNADKLCKQILQGKLKGKMHNLVLLAEGVGGANELAKYIEEVTGIETRSTILGHIQRGGSPTCMDRILASRMAYKAVELLISGKSSRVVGIKNGKIIDMDIDEALAVERSFDQELYDIATILSK.

G11 is a binding site for ATP. 21–25 (RAVVR) provides a ligand contact to ADP. Residues 72–73 (RC) and 102–105 (GDGS) contribute to the ATP site. D103 provides a ligand contact to Mg(2+). 125–127 (TID) serves as a coordination point for substrate. The Proton acceptor role is filled by D127. R154 provides a ligand contact to ADP. Substrate contacts are provided by residues R162 and 169-171 (MGR). ADP is bound by residues 185 to 187 (GAE), K211, and 213 to 215 (KMH). Residues E222, R243, and 249–252 (HIQR) contribute to the substrate site.

It belongs to the phosphofructokinase type A (PFKA) family. ATP-dependent PFK group I subfamily. Prokaryotic clade 'B1' sub-subfamily. As to quaternary structure, homotetramer. Requires Mg(2+) as cofactor.

The protein localises to the cytoplasm. It catalyses the reaction beta-D-fructose 6-phosphate + ATP = beta-D-fructose 1,6-bisphosphate + ADP + H(+). It functions in the pathway carbohydrate degradation; glycolysis; D-glyceraldehyde 3-phosphate and glycerone phosphate from D-glucose: step 3/4. With respect to regulation, allosterically activated by ADP and other diphosphonucleosides, and allosterically inhibited by phosphoenolpyruvate. Catalyzes the phosphorylation of D-fructose 6-phosphate to fructose 1,6-bisphosphate by ATP, the first committing step of glycolysis. The polypeptide is ATP-dependent 6-phosphofructokinase (Clostridium botulinum (strain ATCC 19397 / Type A)).